The following is a 357-amino-acid chain: Chorismate synthase (357 aa).

An NADP(+)-binding site is contributed by R47. FMN contacts are provided by residues 123–125, G281, 296–300, and R324; these read RSS and KPTSS.

This sequence belongs to the chorismate synthase family. In terms of assembly, homotetramer. The cofactor is FMNH2.

It catalyses the reaction 5-O-(1-carboxyvinyl)-3-phosphoshikimate = chorismate + phosphate. It functions in the pathway metabolic intermediate biosynthesis; chorismate biosynthesis; chorismate from D-erythrose 4-phosphate and phosphoenolpyruvate: step 7/7. Its function is as follows. Catalyzes the anti-1,4-elimination of the C-3 phosphate and the C-6 proR hydrogen from 5-enolpyruvylshikimate-3-phosphate (EPSP) to yield chorismate, which is the branch point compound that serves as the starting substrate for the three terminal pathways of aromatic amino acid biosynthesis. This reaction introduces a second double bond into the aromatic ring system. In Chlamydia muridarum (strain MoPn / Nigg), this protein is Chorismate synthase.